We begin with the raw amino-acid sequence, 101 residues long: NAD(P)H-quinone oxidoreductase subunit 4L, chloroplastic (101 aa).

The next 3 helical transmembrane spans lie at 2–22 (ILEHVLVLSAYLFLIGLYGLI), 32–52 (MCLELILNAVNMNFVTFSDFF), and 61–81 (IFCIFVIAIAAAEAAIGLAIV).

This sequence belongs to the complex I subunit 4L family. In terms of assembly, NDH is composed of at least 16 different subunits, 5 of which are encoded in the nucleus.

The protein resides in the plastid. It is found in the chloroplast thylakoid membrane. It catalyses the reaction a plastoquinone + NADH + (n+1) H(+)(in) = a plastoquinol + NAD(+) + n H(+)(out). It carries out the reaction a plastoquinone + NADPH + (n+1) H(+)(in) = a plastoquinol + NADP(+) + n H(+)(out). NDH shuttles electrons from NAD(P)H:plastoquinone, via FMN and iron-sulfur (Fe-S) centers, to quinones in the photosynthetic chain and possibly in a chloroplast respiratory chain. The immediate electron acceptor for the enzyme in this species is believed to be plastoquinone. Couples the redox reaction to proton translocation, and thus conserves the redox energy in a proton gradient. The protein is NAD(P)H-quinone oxidoreductase subunit 4L, chloroplastic of Crucihimalaya wallichii (Rock-cress).